The chain runs to 392 residues: Imidazolonepropionase (392 aa).

2 residues coordinate Fe(3+): His-70 and His-72. Zn(2+) contacts are provided by His-70 and His-72. Residues Arg-79, Tyr-137, and His-164 each contribute to the 4-imidazolone-5-propanoate site. Tyr-137 serves as a coordination point for N-formimidoyl-L-glutamate. His-227 serves as a coordination point for Fe(3+). Residue His-227 coordinates Zn(2+). Residue Gln-230 coordinates 4-imidazolone-5-propanoate. Position 301 (Asp-301) interacts with Fe(3+). Asp-301 contributes to the Zn(2+) binding site. 2 residues coordinate N-formimidoyl-L-glutamate: Asn-303 and Gly-305. A 4-imidazolone-5-propanoate-binding site is contributed by Thr-306.

Belongs to the metallo-dependent hydrolases superfamily. HutI family. Zn(2+) is required as a cofactor. The cofactor is Fe(3+).

The protein localises to the cytoplasm. It carries out the reaction 4-imidazolone-5-propanoate + H2O = N-formimidoyl-L-glutamate. It functions in the pathway amino-acid degradation; L-histidine degradation into L-glutamate; N-formimidoyl-L-glutamate from L-histidine: step 3/3. In terms of biological role, catalyzes the hydrolytic cleavage of the carbon-nitrogen bond in imidazolone-5-propanoate to yield N-formimidoyl-L-glutamate. It is the third step in the universal histidine degradation pathway. The protein is Imidazolonepropionase of Nocardia farcinica (strain IFM 10152).